The primary structure comprises 461 residues: tRNA modification GTPase MnmE (461 aa).

(6S)-5-formyl-5,6,7,8-tetrahydrofolate-binding residues include Arg23, Glu84, and Lys123. The region spanning 219 to 382 (GVQVVIGGRP…LLDHLTDTVA (164 aa)) is the TrmE-type G domain. GTP-binding positions include 229 to 234 (NAGKST), 248 to 254 (SETPGTT), 273 to 276 (DTAG), and 337 to 340 (NKAD). Residues Ser233 and Thr254 each coordinate Mg(2+). Lys461 contacts (6S)-5-formyl-5,6,7,8-tetrahydrofolate.

It belongs to the TRAFAC class TrmE-Era-EngA-EngB-Septin-like GTPase superfamily. TrmE GTPase family. As to quaternary structure, homodimer. Heterotetramer of two MnmE and two MnmG subunits. K(+) is required as a cofactor.

The protein localises to the cytoplasm. Its function is as follows. Exhibits a very high intrinsic GTPase hydrolysis rate. Involved in the addition of a carboxymethylaminomethyl (cmnm) group at the wobble position (U34) of certain tRNAs, forming tRNA-cmnm(5)s(2)U34. The chain is tRNA modification GTPase MnmE from Salinibacter ruber (strain DSM 13855 / M31).